Here is a 1104-residue protein sequence, read N- to C-terminus: Transient receptor potential cation channel subfamily M member 8 (1104 aa).

The disordered stretch occupies residues 1–22 (MSFEGARLSMRSRRNGTMGSTR). The Cytoplasmic portion of the chain corresponds to 1–733 (MSFEGARLSM…LWYYVAFFTS (733 aa)). Residues 734–758 (PFVVFSWNVVFYIAFLLLFAYVLLM) traverse the membrane as a helical segment. Over 759–765 (DFHSVPH) the chain is Extracellular. The helical transmembrane segment at 766–789 (TPELILYALVFVLFCDEVRQWYMN) threads the bilayer. Positions 782 and 785 each coordinate Ca(2+). Residues 790-796 (GVNYFTD) are Cytoplasmic-facing. A helical transmembrane segment spans residues 797 to 817 (LWNVMDTLGLFYFIAGIVFRL). Ca(2+) is bound by residues Asn-799 and Asp-802. The Extracellular portion of the chain corresponds to 818–822 (HSSNK). A helical membrane pass occupies residues 823–848 (SSLYSGRVIFCLDYIIFTLRLIHIFT). At 849 to 853 (VSRNL) the chain is on the cytoplasmic side. A helical transmembrane segment spans residues 854 to 890 (GPKIIMLQRMLIDVFFFLFLFAVWMVAFGVARQGILR). The Extracellular portion of the chain corresponds to 891–895 (QNEQR). The segment at residues 896–912 (WRWIFRSVIYEPYLAMF) is an intramembrane region (pore-forming). Topologically, residues 913–953 (GQVPSDVDSTTYDFSHCTFSGNESKPLCVELDEHNLPRFPE) are extracellular. An N-linked (GlcNAc...) (complex) asparagine glycan is attached at Asn-934. A helical transmembrane segment spans residues 954-984 (WITIPLVCIYMLSTNILLVNLLVAMFGYTVG). Topologically, residues 985 to 1104 (IVQENNDQVW…LLKEIANNIK (120 aa)) are cytoplasmic. Residues 1069–1104 (TKANDNSEEMRHRFRQLDSKLNDLKSLLKEIANNIK) adopt a coiled-coil conformation.

Belongs to the transient receptor (TC 1.A.4) family. LTrpC subfamily. TRPM8 sub-subfamily. Homotetramer. Interacts (via N-terminus and C-terminus domains) with TCAF1; the interaction stimulates TRPM8 channel activity. Interacts (via N-terminus and C-terminus domains) with TCAF2; the interaction inhibits TRPM8 channel activity. In terms of processing, N-glycosylation is not essential for but facilitates cell surface expression, multimerization, association with lipid rafts and ion channel activity. Expressed in dorsal root and trigeminal ganglia. Specifically expressed in a subset of pain- and temperature-sensing neurons. Not expressed in heavily myelinated neurons. Not expressed in neurons expressing TRPA1 or TRPV1.

The protein resides in the cell membrane. It localises to the membrane raft. The enzyme catalyses Ca(2+)(in) = Ca(2+)(out). It carries out the reaction Na(+)(in) = Na(+)(out). The catalysed reaction is K(+)(in) = K(+)(out). With respect to regulation, activated by cold temperatures and by both natural and synthetic cooling compounds such as menthol and icilin. Activation of the channel requires the presence of PI(4,5)P2; PI(4,5)P2 is necessary to gate the channel. Activated by intracellular Ca(2+). In terms of biological role, non-selective ion channel permeable to monovalent and divalent cations, including Na(+), K(+), and Ca(2+), with higher permeability for Ca(2+). Activated by multiple factors, such as temperature, voltage, pressure, and changes in osmolality. Activated by cool temperatures (&lt;23-28 degrees Celsius) and by chemical ligands evoking a sensation of coolness, such as menthol and icilin, therefore plays a central role in the detection of environmental cold temperatures. TRPM8 is a voltage-dependent channel; its activation by cold or chemical ligands shifts its voltage thresholds towards physiological membrane potentials, leading to the opening of the channel. In addition to its critical role in temperature sensing, regulates basal tear secretion by sensing evaporation-induced cooling and changes in osmolality. In Mus musculus (Mouse), this protein is Transient receptor potential cation channel subfamily M member 8 (Trpm8).